Here is a 143-residue protein sequence, read N- to C-terminus: Putative complexin-1 (143 aa).

The segment at 15–71 (NEVTGGLGLKDDGGEKTETGEDPEVVAARLEQEERRKEKHRKMEQEREKMRQGIRDK) is disordered. 2 stretches are compositionally biased toward basic and acidic residues: residues 23–33 (LKDDGGEKTET) and 44–71 (LEQEERRKEKHRKMEQEREKMRQGIRDK). A coiled-coil region spans residues 40-71 (VAARLEQEERRKEKHRKMEQEREKMRQGIRDK).

Belongs to the complexin/synaphin family.

It localises to the cytoplasm. It is found in the cytosol. In terms of biological role, positively regulates a late step in synaptic vesicle exocytosis. The sequence is that of Putative complexin-1 (cpx-1) from Caenorhabditis briggsae.